The primary structure comprises 215 residues: Cytochrome b6 (215 aa).

A helical transmembrane segment spans residues isoleucine 32–phenylalanine 52. Cysteine 35 is a heme c binding site. Heme b-binding residues include histidine 86 and histidine 100. 3 helical membrane-spanning segments follow: residues alanine 90–phenylalanine 110, leucine 116–tyrosine 136, and leucine 186–isoleucine 206. Heme b contacts are provided by histidine 187 and histidine 202.

This sequence belongs to the cytochrome b family. PetB subfamily. In terms of assembly, the 4 large subunits of the cytochrome b6-f complex are cytochrome b6, subunit IV (17 kDa polypeptide, PetD), cytochrome f and the Rieske protein, while the 4 small subunits are PetG, PetL, PetM and PetN. The complex functions as a dimer. Heme b is required as a cofactor. It depends on heme c as a cofactor.

It localises to the plastid. The protein localises to the chloroplast thylakoid membrane. Functionally, component of the cytochrome b6-f complex, which mediates electron transfer between photosystem II (PSII) and photosystem I (PSI), cyclic electron flow around PSI, and state transitions. The sequence is that of Cytochrome b6 from Agrostis stolonifera (Creeping bentgrass).